The chain runs to 148 residues: Large ribosomal subunit protein bL9 (148 aa).

Belongs to the bacterial ribosomal protein bL9 family.

Binds to the 23S rRNA. This chain is Large ribosomal subunit protein bL9, found in Bacillus cereus (strain ATCC 10987 / NRS 248).